A 437-amino-acid chain; its full sequence is MLQGPRALASAAGQTPKVVPAMSPTELWPSGLSSPQLCPATATYYTPLYPQTAPPAAAPGTCLDATPHGPEGQVVRCLPAGRLPAKRKLDLEGIGRPVVPEFPTPKGKCIRVDGLPSPKTPKSPGEKTRYDTSLGLLTKKFIYLLSESEDGVLDLNWAAEVLDVQKRRIYDITNVLEGIQLIRKKAKNNIQWVGRGMFEDPTRPGKQQQLGQELKELMNTEQALDQLIQSCSLSFKHLTEDKANKRLAYVTYQDIRAVGNFKEQTVIAVKAPPQTRLEVPDRTEDNLQIYLKSTQGPIEVYLCPEEVQEPDSPSEEPLPSTSTLCPSPDSAQPSSSTDPSIMEPTASSVPAPAPTPQQAPPPPSLVPLEATDSLLELPHPLLQQTEDQFLSPTLACSSPLISFSPSLDQDDYLWGLEAGEGISDLFDSYDLGDLLIN.

The tract at residues 65–105 (ATPHGPEGQVVRCLPAGRLPAKRKLDLEGIGRPVVPEFPTP) is cyclin A/CDK2 binding. Residues 107 to 196 (GKCIRVDGLP…KNNIQWVGRG (90 aa)) mediate DNA binding. A leucine-zipper region spans residues 155–176 (LNWAAEVLDVQKRRIYDITNVL). The short motif at 160–196 (EVLDVQKRRIYDITNVLEGIQLIRKKAKNNIQWVGRG) is the DEF box element. The tract at residues 197-289 (MFEDPTRPGK…PDRTEDNLQI (93 aa)) is dimerization. A disordered region spans residues 307-368 (VQEPDSPSEE…APPPPSLVPL (62 aa)). Residues 315-330 (EEPLPSTSTLCPSPDS) are compositionally biased toward low complexity. Pro residues predominate over residues 351–365 (APAPTPQQAPPPPSL). A transactivation region spans residues 359 to 437 (APPPPSLVPL…SYDLGDLLIN (79 aa)). Residues 410-427 (DDYLWGLEAGEGISDLFD) form a retinoblastoma protein binding region.

Belongs to the E2F/DP family. Component of the DRTF1/E2F transcription factor complex. Forms heterodimers with DP family members. The E2F2 complex binds specifically hypophosphorylated retinoblastoma protein RB1. During the cell cycle, RB1 becomes phosphorylated in mid-to-late G1 phase, detaches from the DRTF1/E2F complex, rendering E2F transcriptionally active. Viral oncoproteins, notably E1A, T-antigen and HPV E7, are capable of sequestering RB1, thus releasing the active complex. Binds EAPP. Phosphorylated by CDK2 and cyclin A-CDK2 in the S-phase. In terms of tissue distribution, highest level of expression is found in placenta, low levels are found in lung. Found as well in many immortalized cell lines derived from tumor samples.

The protein resides in the nucleus. Its function is as follows. Transcription activator that binds DNA cooperatively with DP proteins through the E2 recognition site, 5'-TTTC[CG]CGC-3' found in the promoter region of a number of genes whose products are involved in cell cycle regulation or in DNA replication. The DRTF1/E2F complex functions in the control of cell-cycle progression from g1 to s phase. E2F2 binds specifically to RB1 in a cell-cycle dependent manner. This Homo sapiens (Human) protein is Transcription factor E2F2 (E2F2).